Reading from the N-terminus, the 503-residue chain is Catalase (503 aa).

The interval 1–26 (MAKDDKRLTGLFGHPVSDRENSMTAG) is disordered. Catalysis depends on residues histidine 56 and asparagine 129. Heme is bound at residue tyrosine 339.

This sequence belongs to the catalase family. Homodimer. The cofactor is heme.

The catalysed reaction is 2 H2O2 = O2 + 2 H2O. Its function is as follows. Decomposes hydrogen peroxide into water and oxygen; serves to protect cells from the toxic effects of hydrogen peroxide. This chain is Catalase (katA), found in Staphylococcus haemolyticus (strain JCSC1435).